Reading from the N-terminus, the 611-residue chain is Acetylcholinesterase (611 aa).

The first 31 residues, M1–A31, serve as a signal peptide directing secretion. An intrachain disulfide couples C97 to C124. The Acyl-ester intermediate role is filled by S231. A disulfide bridge links C285 with C300. N293 carries N-linked (GlcNAc...) asparagine glycosylation. The active-site Charge relay system is E362. N-linked (GlcNAc...) asparagine glycosylation is present at N378. A disulfide bond links C437 and C557. The active-site Charge relay system is H475. N-linked (GlcNAc...) asparagine glycosylation is present at N492.

Belongs to the type-B carboxylesterase/lipase family. Interacts with PRIMA1. The interaction with PRIMA1 is required to anchor it to the basal lamina of cells and organize into tetramers. Isoform H generates GPI-anchored dimers; disulfide linked. Isoform T generates multiple structures, ranging from monomers and dimers to collagen-tailed and hydrophobic-tailed forms, in which catalytic tetramers are associated with anchoring proteins that attach them to the basal lamina or to cell membranes. In the collagen-tailed forms, isoform T subunits are associated with a specific collagen, COLQ, which triggers the formation of isoform T tetramers, from monomers and dimers.

The protein localises to the synapse. It is found in the secreted. The protein resides in the cell membrane. The enzyme catalyses acetylcholine + H2O = choline + acetate + H(+). In terms of biological role, terminates signal transduction at the neuromuscular junction by rapid hydrolysis of the acetylcholine released into the synaptic cleft. The chain is Acetylcholinesterase (ACHE) from Felis catus (Cat).